We begin with the raw amino-acid sequence, 151 residues long: Probable cGMP 3',5'-cyclic phosphodiesterase subunit delta (151 aa).

It belongs to the PDE6D/unc-119 family. In terms of assembly, interacts with Pde6.

Its subcellular location is the nucleus. The protein localises to the cytoplasm. This Drosophila persimilis (Fruit fly) protein is Probable cGMP 3',5'-cyclic phosphodiesterase subunit delta.